The chain runs to 487 residues: Protein FAM221B (487 aa).

Polar residues-rich tracts occupy residues methionine 1–threonine 13 and histidine 36–histidine 48. 2 disordered regions span residues methionine 1–threonine 103 and glutamine 132–arginine 289. Low complexity predominate over residues proline 81 to threonine 103. Basic and acidic residues-rich tracts occupy residues glutamate 227–phenylalanine 236 and alanine 243–glutamate 253. A Phosphoserine modification is found at serine 248.

The protein belongs to the FAM221 family.

This Mus musculus (Mouse) protein is Protein FAM221B (Fam221b).